Here is a 78-residue protein sequence, read N- to C-terminus: Large ribosomal subunit protein bL28 (78 aa).

It belongs to the bacterial ribosomal protein bL28 family.

This is Large ribosomal subunit protein bL28 from Trichodesmium erythraeum (strain IMS101).